We begin with the raw amino-acid sequence, 270 residues long: tRNA pseudouridine synthase B (270 aa).

Aspartate 49 functions as the Nucleophile in the catalytic mechanism.

It belongs to the pseudouridine synthase TruB family. Type 1 subfamily.

It carries out the reaction uridine(55) in tRNA = pseudouridine(55) in tRNA. Functionally, responsible for synthesis of pseudouridine from uracil-55 in the psi GC loop of transfer RNAs. The chain is tRNA pseudouridine synthase B from Bartonella quintana (strain Toulouse) (Rochalimaea quintana).